Here is a 1077-residue protein sequence, read N- to C-terminus: Receptor-like protein 1 (1077 aa).

A signal peptide spans 1–38; sequence MRTDERRRWWVKPKKHITLVFITITMIIQFQMKGCVSC. Positions 39–120 are N-cap; that stretch reads VETERMGLLQ…SQTRSLNLSL (82 aa). Residues 39 to 1024 lie on the Extracellular side of the membrane; it reads VETERMGLLQ…NEEEGNVIDM (986 aa). N-linked (GlcNAc...) asparagine glycans are attached at residues asparagine 117, asparagine 131, and asparagine 139. LRR repeat units lie at residues 124–147, 153–176, 177–201, 202–225, 227–250, 251–274, 275–299, 300–324, 326–348, 351–376, 378–397, and 399–424; these read FPQLQSLNLSWNWFTNLSDHFLGF, LDKLTTLDFSHNMFDNSIVPFLNA, ATSIRSLHLESNYMEGVFPPQELSN, MTNLRVLNLKDNSFSFLSSQGLTD, RDLEVLDLSFNGVNDSEASHSLST, AKLKTLDLNFNPLSDFSQLKGLES, LQELQVLKLRGNKFNHTLSTHVLKD, LKMLQELDLSDNGFTNLDHGRGLEI, TSLQVLDFKRNQLSLTHEGYLGI, LMKLRELDLSSNALTSLPYCLGNLTH, RTLDLSNNQLNGNLSSFVSG, and PSVLEYLSLLDNNFDGSFLFNSLVNQ. Asparagine 201 is a glycosylation site (N-linked (GlcNAc...) asparagine). The N-linked (GlcNAc...) asparagine glycan is linked to asparagine 240. A glycan (N-linked (GlcNAc...) asparagine) is linked at asparagine 289. 3 N-linked (GlcNAc...) asparagine glycosylation sites follow: asparagine 373, asparagine 390, and asparagine 423. Residues 425-449 form an LRR 13; degenerate repeat; sequence TRLTVFKLSSKVGVIQVQTESSWAP. LRR repeat units follow at residues 450-473, 474-498, 499-522, 524-545, 546-570, 572-594, 595-621, 623-643, 644-666, 667-694, 696-713, 714-737, 739-761, 762-785, 786-808, 877-901, 902-925, 927-949, and 951-970; these read LFQLKMLYLSNCSLGSTMLGFLVH, QRDLCFVDLSHNKLTGTFPTWLVKN, NTRLQTILLSGNSLTKLQLPILVH, LQVLDISSNMIYDSIQEDIGMV, FPNLRFMNFSSNHFQGTIPSSIGEM, SLQVLDMSSNGLYGQLPIMFLSG, CYSLRVLKLSNNQLQGKIFSKHANLTG, VGLFLDGNNFTGSLEEGLLKS, KNLTLLDISDNRFSGMLPLWIGR, ISRLSYLYMSGNQLKGPFPFLRQSPWVE, MDISHNSFSGSIPRNVNF, PSLRELRLQNNEFTGLVPGNLFKA, GLEVLDLRNNNFSGKILNTIDQT, SKLRILLLRNNSFQTYIPGKICQL, SEVGLLDLSHNQFRGPIPSCFSK, LRYMHGLDLSSNELSGEIPIEIGDL, QNIRSLNLSSNRLTGSIPDSISKL, GLESLDLSNNKLDGSIPPALADL, and SLGYLNISYNNLSGEIPFKG. N-linked (GlcNAc...) asparagine glycans are attached at residues asparagine 460 and asparagine 498. N-linked (GlcNAc...) asparagine glycosylation is present at asparagine 553. N-linked (GlcNAc...) asparagine glycans are attached at residues asparagine 618, asparagine 631, and asparagine 645. N-linked (GlcNAc...) asparagine glycans are attached at residues asparagine 749 and asparagine 771. An N-linked (GlcNAc...) asparagine glycan is attached at asparagine 908. Asparagine 956 and asparagine 961 each carry an N-linked (GlcNAc...) asparagine glycan. The tract at residues 971 to 1024 is C-cap/acidic domain; it reads HLVTFDERSYIGNAHLCGLPTNKNCISQRVPEPPSVSTHAKEEENEEEGNVIDM. Residues 1025 to 1045 form a helical membrane-spanning segment; sequence VWFYWTCAAVYISTSLALFAF. Residues 1046 to 1077 lie on the Cytoplasmic side of the membrane; the sequence is LYIDSRWSREWFYRVDLCVHHILQFKRSSVCN.

It belongs to the RLP family.

It localises to the cell membrane. Functionally, involved in plant defense. Confers resistance to the bacterial pathogen Xanthomonas through recognition of the microbe-associated molecular pattern (MAMP) eMax. Functionality seems to depend on the presence of the receptor kinase SOBIR1 as an adapter protein. This is Receptor-like protein 1 from Arabidopsis thaliana (Mouse-ear cress).